Here is a 261-residue protein sequence, read N- to C-terminus: Antiviral protein S (261 aa).

2 cysteine pairs are disulfide-bonded: Cys-34-Cys-258 and Cys-84-Cys-105. Residue Glu-175 is part of the active site.

It belongs to the ribosome-inactivating protein family. Type 1 RIP subfamily.

The enzyme catalyses Endohydrolysis of the N-glycosidic bond at one specific adenosine on the 28S rRNA.. Its function is as follows. Inhibits viral infection of plants, and protein synthesis in vitro. This chain is Antiviral protein S, found in Phytolacca americana (American pokeweed).